The primary structure comprises 181 residues: Translationally-controlled tumor protein homolog (181 aa).

The region spanning 1-181 is the TCTP domain; sequence MLIYKDIFTD…VKEAIIEEKC (181 aa).

The protein belongs to the TCTP family.

The protein resides in the cytoplasm. Functionally, involved in calcium binding and microtubule stabilization. In Caenorhabditis elegans, this protein is Translationally-controlled tumor protein homolog (tct-1).